We begin with the raw amino-acid sequence, 396 residues long: Elongation factor Tu 2 (396 aa).

Residues 10–206 (KPHVNIGTIG…AVDSYIPTPQ (197 aa)) form the tr-type G domain. Positions 19 to 26 (GHVDHGKT) are G1. 19-26 (GHVDHGKT) contributes to the GTP binding site. Thr26 contacts Mg(2+). A G2 region spans residues 60–64 (GITIS). The interval 81-84 (DCPG) is G3. Residues 81–85 (DCPGH) and 136–139 (NKVD) contribute to the GTP site. The tract at residues 136 to 139 (NKVD) is G4. The interval 174–176 (SAL) is G5.

Belongs to the TRAFAC class translation factor GTPase superfamily. Classic translation factor GTPase family. EF-Tu/EF-1A subfamily. In terms of assembly, monomer.

It is found in the cytoplasm. The catalysed reaction is GTP + H2O = GDP + phosphate + H(+). In terms of biological role, GTP hydrolase that promotes the GTP-dependent binding of aminoacyl-tRNA to the A-site of ribosomes during protein biosynthesis. The polypeptide is Elongation factor Tu 2 (Myxococcus xanthus (strain DK1622)).